Consider the following 184-residue polypeptide: Elongation factor P (184 aa).

Belongs to the elongation factor P family.

It localises to the cytoplasm. It functions in the pathway protein biosynthesis; polypeptide chain elongation. Its function is as follows. Involved in peptide bond synthesis. Stimulates efficient translation and peptide-bond synthesis on native or reconstituted 70S ribosomes in vitro. Probably functions indirectly by altering the affinity of the ribosome for aminoacyl-tRNA, thus increasing their reactivity as acceptors for peptidyl transferase. The polypeptide is Elongation factor P (Polaromonas sp. (strain JS666 / ATCC BAA-500)).